Consider the following 446-residue polypeptide: Packaging protein 1 (446 aa).

Residues 1 to 72 (MEEKAGLRHL…SQVSKSKKQR (72 aa)) form a disordered region. Polar residues predominate over residues 10-21 (LQNQQNEPSQDP). Basic and acidic residues predominate over residues 32-43 (HSDRNHLNKEAE). Residue 170 to 177 (GPTGCGKS) participates in ATP binding. A DNA-binding region spans residues 439–446 (RYYHSKKK).

Belongs to the adenoviridae packaging protein 1 family. In terms of assembly, homodimer. Part of a genome packaging complex composed of packaging proteins 1, 2 and 3; this complex specifically binds to the packaging sequence on the left end of viral genomic DNA and performs packaging of the viral genome. Interacts with protein 33K.

The protein localises to the virion. The protein resides in the host nucleus. It is found in the host nucleoplasm. Its subcellular location is the host nucleolus. Component of the packaging machinery which encapsidates the viral DNA into preformed capsids and transcriptional activator of the viral major late promoter (MLP). Binds, along with packaging proteins 2 and 3, to the specific packaging sequence on the left end of viral genomic DNA and displays ATPase activity thereby providing the power stroke of the packaging machinery. The activity of packaging protein IVa2 is stimulated by protein 33K which acts as a terminase. May be the protein that pumps DNA into the capsid powered by ATP hydrolysis. Specifically binds to the 5'-CG-3' nucleotides of the repeats making up the packaging sequence. Component of the DEF-A and DEF-B transcription factors that bind downstream elements of the major late promoter (MLP), and stimulate transcription from the MLP after initiation of viral DNA replication. DEF-A is a heterodimer packaging proteins 1 and 2 and DEF-B is a homodimer of packaging protein 1. In Canine adenovirus serotype 1 (strain CLL) (CAdV-1), this protein is Packaging protein 1.